We begin with the raw amino-acid sequence, 107 residues long: Lipid-anchored protein YDL012C (107 aa).

Over residues 1–18 (MSAQDYYGNSASKQSYSR) the composition is skewed to polar residues. Residues 1–86 (MSAQDYYGNS…VQQQPASSGN (86 aa)) are disordered. Ser2 carries the N-acetylserine modification. Lys13 is covalently cross-linked (Glycyl lysine isopeptide (Lys-Gly) (interchain with G-Cter in ubiquitin)). Low complexity predominate over residues 35–81 (PSQSQQNYYPPQQQQQQYQQQPQYYQQQQPQYYQQHPQQPIYVQQQP).

Belongs to the CYSTM1 family.

The protein localises to the cell membrane. The chain is Lipid-anchored protein YDL012C from Saccharomyces cerevisiae (strain ATCC 204508 / S288c) (Baker's yeast).